The following is a 332-amino-acid chain: Biotin synthase (332 aa).

The 230-residue stretch at 53-282 (YFGKKVKLNM…TKEIRISGGR (230 aa)) folds into the Radical SAM core domain. Cysteine 71, cysteine 75, and cysteine 78 together coordinate [4Fe-4S] cluster. 4 residues coordinate [2Fe-2S] cluster: cysteine 115, cysteine 147, cysteine 207, and arginine 277.

Belongs to the radical SAM superfamily. Biotin synthase family. In terms of assembly, homodimer. Requires [4Fe-4S] cluster as cofactor. The cofactor is [2Fe-2S] cluster.

It carries out the reaction (4R,5S)-dethiobiotin + (sulfur carrier)-SH + 2 reduced [2Fe-2S]-[ferredoxin] + 2 S-adenosyl-L-methionine = (sulfur carrier)-H + biotin + 2 5'-deoxyadenosine + 2 L-methionine + 2 oxidized [2Fe-2S]-[ferredoxin]. It functions in the pathway cofactor biosynthesis; biotin biosynthesis; biotin from 7,8-diaminononanoate: step 2/2. Catalyzes the conversion of dethiobiotin (DTB) to biotin by the insertion of a sulfur atom into dethiobiotin via a radical-based mechanism. The polypeptide is Biotin synthase (Bacillus thuringiensis (strain Al Hakam)).